Reading from the N-terminus, the 432-residue chain is Adenosine 3'-phospho 5'-phosphosulfate transporter 1 (432 aa).

9 consecutive transmembrane segments (helical) span residues 5–25 (WWAVVVLAAFPSLGAGGETPE), 40–60 (VVNAAGYASFMVPGYLLVQYF), 109–129 (ALKLLFCATGLQVSYLTWGVL), 154–174 (FLVLMNRVLALIVAGLSCVLC), 238–258 (WEYLTATLISIGVSMFLLSSG), 265–285 (PATTLSGLILLAGYIAFDSFT), 299–319 (SVQMMFGVNFFSCLFTVGSLL), 353–373 (LFIFYTIGQFGAAVFTIIMTL), and 387–407 (GHTVTVVGGLGVAVVFAALLL). Position 427 is a phosphoserine (Ser427).

It belongs to the nucleotide-sugar transporter family. SLC35B subfamily.

It is found in the golgi apparatus membrane. It catalyses the reaction 3'-phosphoadenylyl sulfate(in) + adenosine 3',5'-bisphosphate(out) = 3'-phosphoadenylyl sulfate(out) + adenosine 3',5'-bisphosphate(in). In terms of biological role, probably functions as a 3'-phosphoadenylyl sulfate:adenosine 3',5'-bisphosphate antiporter at the Golgi membranes. Mediates the transport from the cytosol into the lumen of the Golgi of 3'-phosphoadenylyl sulfate/adenosine 3'-phospho 5'-phosphosulfate (PAPS), a universal sulfuryl donor for sulfation events that take place in that compartment. This Pongo abelii (Sumatran orangutan) protein is Adenosine 3'-phospho 5'-phosphosulfate transporter 1.